A 328-amino-acid chain; its full sequence is Arabinose 5-phosphate isomerase KdsD (328 aa).

Residues 41–184 (ACEKMFNCTG…AVALLKARGF (144 aa)) form the SIS domain. Substrate-binding positions include 75–76 (GT), His82, His88, 114–123 (ALIPVLKRLH), and 148–150 (KVP). His82 lines the Zn(2+) pocket. Residues 210-268 (MHTGDEIPHVNKHATLRDALLEITRKNLGMTVICDESMKIDGIFTDGDLRRMFDMGGDM) enclose the CBS 1 domain. Glu275 contacts substrate. In terms of domain architecture, CBS 2 spans 277–328 (MTPGGIRVRPGILAVDALNLMQSRHITSVLVADGDQLLGVLHMHDLLRAGVV).

It belongs to the SIS family. GutQ/KpsF subfamily. In terms of assembly, homotetramer.

It carries out the reaction D-arabinose 5-phosphate = D-ribulose 5-phosphate. It functions in the pathway carbohydrate biosynthesis; 3-deoxy-D-manno-octulosonate biosynthesis; 3-deoxy-D-manno-octulosonate from D-ribulose 5-phosphate: step 1/3. Its pathway is bacterial outer membrane biogenesis; lipopolysaccharide biosynthesis. Its function is as follows. Involved in the biosynthesis of 3-deoxy-D-manno-octulosonate (KDO), a unique 8-carbon sugar component of lipopolysaccharides (LPSs). Catalyzes the reversible aldol-ketol isomerization between D-ribulose 5-phosphate (Ru5P) and D-arabinose 5-phosphate (A5P). This Salmonella typhi protein is Arabinose 5-phosphate isomerase KdsD (kdsD).